The chain runs to 401 residues: Solute carrier family 22 member 17 (401 aa).

The next 10 helical transmembrane spans lie at 10–30, 35–55, 69–89, 100–120, 184–203, 218–238, 247–267, 277–297, 309–329, and 336–356; these read GIVL…AAAG, IMAL…GVYL, VALA…GLAL, MITA…FLES, NIWK…HAIR, FYLC…FLGV, GILL…LGLW, TFSV…TLLA, GLGL…AQRL, and FLQH…IMLL.

Belongs to the major facilitator (TC 2.A.1) superfamily. Organic cation transporter (TC 2.A.1.19) family. Widely expressed.

Its subcellular location is the cell membrane. The protein localises to the vacuole membrane. Functionally, cell surface receptor for LCN2 (24p3) that plays a key role in iron homeostasis and transport. Able to bind iron-bound LCN2 (holo-24p3), followed by internalization of holo-24p3 and release of iron, thereby increasing intracellular iron concentration and leading to inhibition of apoptosis. Also binds iron-free LCN2 (apo-24p3), followed by internalization of apo-24p3 and its association with an intracellular siderophore, leading to iron chelation and iron transfer to the extracellular medium, thereby reducing intracellular iron concentration and resulting in apoptosis. This chain is Solute carrier family 22 member 17 (Slc22a17), found in Mus musculus (Mouse).